We begin with the raw amino-acid sequence, 692 residues long: Elongation factor G (692 aa).

The region spanning 8 to 282 is the tr-type G domain; the sequence is KDTRNIGIMA…AVLDYLPSPL (275 aa). Residues 17–24, 81–85, and 135–138 each bind GTP; these read AHIDAGKT, DTPGH, and NKMD.

Belongs to the TRAFAC class translation factor GTPase superfamily. Classic translation factor GTPase family. EF-G/EF-2 subfamily.

It localises to the cytoplasm. Its function is as follows. Catalyzes the GTP-dependent ribosomal translocation step during translation elongation. During this step, the ribosome changes from the pre-translocational (PRE) to the post-translocational (POST) state as the newly formed A-site-bound peptidyl-tRNA and P-site-bound deacylated tRNA move to the P and E sites, respectively. Catalyzes the coordinated movement of the two tRNA molecules, the mRNA and conformational changes in the ribosome. The polypeptide is Elongation factor G (Shouchella clausii (strain KSM-K16) (Alkalihalobacillus clausii)).